A 369-amino-acid chain; its full sequence is Aminomethyltransferase (369 aa).

It belongs to the GcvT family. In terms of assembly, the glycine cleavage system is composed of four proteins: P, T, L and H.

The enzyme catalyses N(6)-[(R)-S(8)-aminomethyldihydrolipoyl]-L-lysyl-[protein] + (6S)-5,6,7,8-tetrahydrofolate = N(6)-[(R)-dihydrolipoyl]-L-lysyl-[protein] + (6R)-5,10-methylene-5,6,7,8-tetrahydrofolate + NH4(+). Functionally, the glycine cleavage system catalyzes the degradation of glycine. This chain is Aminomethyltransferase, found in Synechococcus sp. (strain WH7803).